Consider the following 166-residue polypeptide: Small ribosomal subunit protein uS5 (166 aa).

Positions 12–75 (YIEKLVQVNR…EAARRNMIQV (64 aa)) constitute an S5 DRBM domain.

Belongs to the universal ribosomal protein uS5 family. As to quaternary structure, part of the 30S ribosomal subunit. Contacts proteins S4 and S8.

Its function is as follows. With S4 and S12 plays an important role in translational accuracy. Functionally, located at the back of the 30S subunit body where it stabilizes the conformation of the head with respect to the body. In Azotobacter vinelandii (strain DJ / ATCC BAA-1303), this protein is Small ribosomal subunit protein uS5.